The chain runs to 190 residues: Selenoprotein S (190 aa).

Residues 28–48 (SLLATYGWYIVFCCILLYVVF) form a helical membrane-spanning segment. Residues 78–90 (RQEALAAARLKMQ) form a VCP/p97-interacting motif (VIM) region. Residues 115 to 138 (KIERWDSVQEGRSYRGDARKRQEE) are compositionally biased toward basic and acidic residues. Positions 115–190 (KIERWDSVQE…RRGPSSGGUG (76 aa)) are disordered. Ser-140 carries the phosphoserine modification. Gly residues predominate over residues 160–174 (RGGGYNPLSGEGGGA). Sec-189 is a non-standard amino acid (selenocysteine).

It belongs to the selenoprotein S family. In terms of assembly, interacts with DERL1 and (via VIM motif) with VCP, suggesting that it forms a membrane complex with DERL1 that serves as a receptor for VCP. Also interacts with DERL2, DERL3 and SELENOK. The SELENOK-SELENOS complex interacts with VCP. Truncated SELENOS proteins produced by failed UGA/Sec decoding are ubiquitinated by the CRL2(KLHDC2) and CRL2(KLHDC3) complexes, which recognizes the glycine (Gly) at the C-terminus of truncated SELENOS proteins. Truncated SELENOS proteins produced by failed UGA/Sec decoding are also ubiquitinated by the CRL5(KLHDC1) complex. In terms of tissue distribution, ubiquitously expressed. Highest expression in liver and lung, with lower levels detected in spleen, kidney, brain, lymph nodes, small intestine, stomach and heart. Very low expression detected in longissimus dorsi.

It is found in the cytoplasm. The protein resides in the endoplasmic reticulum membrane. Involved in the degradation process of misfolded endoplasmic reticulum (ER) luminal proteins. Participates in the transfer of misfolded proteins from the ER to the cytosol, where they are destroyed by the proteasome in a ubiquitin-dependent manner. Probably acts by serving as a linker between DERL1, which mediates the retrotranslocation of misfolded proteins into the cytosol, and the ATPase complex VCP, which mediates the translocation and ubiquitination. The protein is Selenoprotein S of Sus scrofa (Pig).